The sequence spans 528 residues: Tubulin-specific chaperone E (528 aa).

The region spanning 27–71 is the CAP-Gly domain; sequence GLVPPVAGLWLGVEWDNPERGKHDGSHEGTVYFKCRHPTAGSFIR. LRR repeat units follow at residues 152–176, 178–206, 207–229, 231–253, 254–274, 279–300, and 309–330; these read CPNIRSIDLSKNLLSSWEEVIDIAD, LKHLEVLNLSENKLTSPSSSPSPTGTFPT, LKVLVLNRTGVTWAEVLRCASGW, VLEKLYLESNNIIISERPTDVLQ, TVKLLDLSSNQLIDENQLFLI, RLEQLILSDIGISSIHFPDAGI, and SLQYLVLNDNQIAQWSFMNELD. The 43-residue stretch at 343-385 folds into the LRRCT domain; it reads NPLTEGSKDAQTTRQFIIARIGQLRTLNKCAIEPEERRGAELD. Position 464 is an N6-acetyllysine (lysine 464). Serine 496 is modified (phosphoserine).

The protein belongs to the TBCE family. In terms of assembly, supercomplex made of cofactors A to E. Cofactors A and D function by capturing and stabilizing tubulin in a quasi-native conformation. Cofactor E binds to the cofactor D-tubulin complex; interaction with cofactor C then causes the release of tubulin polypeptides that are committed to the native state. Cofactors B and E can form a heterodimer which binds to alpha-tubulin and enhances their ability to dissociate tubulin heterodimers. Interacts with TBCD.

Its subcellular location is the cytoplasm. It is found in the cytoskeleton. Its function is as follows. Tubulin-folding protein; involved in the second step of the tubulin folding pathway and in the regulation of tubulin heterodimer dissociation. Required for correct organization of microtubule cytoskeleton and mitotic splindle, and maintenance of the neuronal microtubule network. The protein is Tubulin-specific chaperone E (TBCE) of Bos taurus (Bovine).